We begin with the raw amino-acid sequence, 139 residues long: uncharacterized protein (139 aa).

The interval 1-26 is disordered; sequence MQLVREKRGAHQHVPRKTTEPQKVRG. Over residues 17–26 the composition is skewed to basic and acidic residues; sequence KTTEPQKVRG.

This is an uncharacterized protein from Ictalurid herpesvirus 1 (strain Auburn) (IcHV-1).